Here is a 266-residue protein sequence, read N- to C-terminus: Putative carbamate hydrolase RutD (266 aa).

It belongs to the AB hydrolase superfamily. Hydrolase RutD family.

It catalyses the reaction carbamate + 2 H(+) = NH4(+) + CO2. Its function is as follows. Involved in pyrimidine catabolism. May facilitate the hydrolysis of carbamate, a reaction that can also occur spontaneously. The sequence is that of Putative carbamate hydrolase RutD from Escherichia coli O150:H5 (strain SE15).